Here is a 140-residue protein sequence, read N- to C-terminus: Large ribosomal subunit protein uL16 (140 aa).

This sequence belongs to the universal ribosomal protein uL16 family. As to quaternary structure, part of the 50S ribosomal subunit.

Its function is as follows. Binds 23S rRNA and is also seen to make contacts with the A and possibly P site tRNAs. This is Large ribosomal subunit protein uL16 from Citrifermentans bemidjiense (strain ATCC BAA-1014 / DSM 16622 / JCM 12645 / Bem) (Geobacter bemidjiensis).